The following is a 708-amino-acid chain: Pre-mRNA-splicing factor SPP382 (708 aa).

The region spanning 61 to 108 (TYGIGAKLLSSMGYVAGKGLGKDGSGITTPIETQSRPMHNAGLGMFSN) is the G-patch domain.

In terms of assembly, component of the NTR complex (NTC-related complex), composed of NTR1, NTR2 and PRP43. Interacts with CLF1 and NTR2. Interacts with PRP43 and PRP45.

The protein resides in the cytoplasm. Its subcellular location is the nucleus. In terms of biological role, involved in pre-mRNA splicing and spliceosome disassembly. Promotes release of excised lariat intron from the spliceosome by acting as a receptor for PRP43. This targeting of PRP43 leads to disassembly of the spliceosome with the separation of the U2, U5, U6 snRNPs and the NTC complex. In Saccharomyces cerevisiae (strain ATCC 204508 / S288c) (Baker's yeast), this protein is Pre-mRNA-splicing factor SPP382 (SPP382).